We begin with the raw amino-acid sequence, 69 residues long: uncharacterized protein (69 aa).

A signal peptide spans 1 to 16; it reads MKKIMLFLAMTSILSA. Cysteine 17 carries the N-palmitoyl cysteine lipid modification. Residue cysteine 17 is the site of S-diacylglycerol cysteine attachment.

It localises to the cell membrane. This is an uncharacterized protein from Bacillus subtilis (strain 168).